Here is a 155-residue protein sequence, read N- to C-terminus: Small ribosomal subunit protein bS6 (155 aa).

Positions 115–137 (EADAAKAEADAARVEAEAKKAET) are enriched in basic and acidic residues. A disordered region spans residues 115–155 (EADAAKAEADAARVEAEAKKAETDETDETVDAETPENEEEN). Over residues 138-155 (DETDETVDAETPENEEEN) the composition is skewed to acidic residues.

The protein belongs to the bacterial ribosomal protein bS6 family.

Functionally, binds together with bS18 to 16S ribosomal RNA. This Desulforapulum autotrophicum (strain ATCC 43914 / DSM 3382 / VKM B-1955 / HRM2) (Desulfobacterium autotrophicum) protein is Small ribosomal subunit protein bS6.